Reading from the N-terminus, the 403-residue chain is 3-hydroxy-3-methylglutaryl-coenzyme A reductase (403 aa).

Catalysis depends on charge relay system residues Glu-99 and Asp-303. His-398 (proton donor) is an active-site residue.

Belongs to the HMG-CoA reductase family.

It catalyses the reaction (R)-mevalonate + 2 NADP(+) + CoA = (3S)-3-hydroxy-3-methylglutaryl-CoA + 2 NADPH + 2 H(+). Its pathway is metabolic intermediate biosynthesis; (R)-mevalonate biosynthesis; (R)-mevalonate from acetyl-CoA: step 3/3. Its activity is regulated as follows. Is competitively inhibited by (R)-HMG-CoA and lovastatin (formerly called mevinolin). Functionally, catalyzes the NADPH-dependent reductive deacylation of (S)-3-hydroxy-3-methylglutaryl-CoA (HMG-CoA) to (R)-mevalonate. Functions in the mevalonate (MVA) pathway leading to isopentenyl diphosphate (IPP), a key precursor for the biosynthesis of isoprenoid compounds such as archaeal membrane lipids. Is also able to catalyze the reduction of mevaldehyde to mevalonate and the oxidative acylation of mevaldehyde to HMG-CoA. The chain is 3-hydroxy-3-methylglutaryl-coenzyme A reductase (hmgA) from Haloferax volcanii (strain ATCC 29605 / DSM 3757 / JCM 8879 / NBRC 14742 / NCIMB 2012 / VKM B-1768 / DS2) (Halobacterium volcanii).